Reading from the N-terminus, the 306-residue chain is Pantothenate kinase (306 aa).

91 to 98 (GSVAVGKS) lines the ATP pocket.

The protein belongs to the prokaryotic pantothenate kinase family.

It is found in the cytoplasm. The catalysed reaction is (R)-pantothenate + ATP = (R)-4'-phosphopantothenate + ADP + H(+). It participates in cofactor biosynthesis; coenzyme A biosynthesis; CoA from (R)-pantothenate: step 1/5. This chain is Pantothenate kinase, found in Streptococcus suis (strain 05ZYH33).